The primary structure comprises 342 residues: Platelet-activating factor receptor (342 aa).

The Extracellular portion of the chain corresponds to 1 to 16 (MELNSSSRVDSEFRYT). N4 carries N-linked (GlcNAc...) asparagine glycosylation. A helical transmembrane segment spans residues 17 to 38 (LFPIVYSIIFVLGIIANGYVLW). Topologically, residues 39–54 (VFARLYPSKKLNEIKI) are cytoplasmic. The helical transmembrane segment at 55–74 (FMVNLTVADLLFLITLPLWI) threads the bilayer. Over 75-91 (VYYSNQGNWFLPKFLCN) the chain is Extracellular. Cysteines 90 and 173 form a disulfide. A helical transmembrane segment spans residues 92–113 (LAGCLFFINTYCSVAFLGVITY). At 114-133 (NRFQAVKYPIKTAQATTRKR) the chain is on the cytoplasmic side. A helical transmembrane segment spans residues 134 to 155 (GIALSLVIWVAIVAAASYFLVM). At 156 to 184 (DSTNVVSNKAGSGNITRCFEHYEKGSKPV) the chain is on the extracellular side. N169 carries N-linked (GlcNAc...) asparagine glycosylation. A helical membrane pass occupies residues 185–205 (LIIHICIVLGFFIVFLLILFC). Topologically, residues 206–233 (NLVIIHTLLRQPVKQQRNAEVRRRALWM) are cytoplasmic. The helical transmembrane segment at 234–254 (VCTVLAVFVICFVPHHMVQLP) threads the bilayer. Topologically, residues 255-276 (WTLAELGMWPSSNHQAINDAHQ) are extracellular. Residues 277–296 (VTLCLLSTNCVLDPVIYCFL) form a helical membrane-spanning segment. The Cytoplasmic segment spans residues 297 to 342 (TKKFRKHLSEKLNIMRSSQKCSRVTTDTGTEMAIPINHTPVNPIKN).

Belongs to the G-protein coupled receptor 1 family. In terms of assembly, interacts with ARRB1.

It is found in the cell membrane. Receptor for platelet activating factor, a chemotactic phospholipid mediator that possesses potent inflammatory, smooth-muscle contractile and hypotensive activity. Seems to mediate its action via a G protein that activates a phosphatidylinositol-calcium second messenger system. The polypeptide is Platelet-activating factor receptor (PTAFR) (Cavia porcellus (Guinea pig)).